The primary structure comprises 443 residues: Methyl-coenzyme M reductase subunit beta (443 aa).

Position 367 (Tyr-367) interacts with coenzyme M. A coenzyme B-binding site is contributed by Gly-369.

It belongs to the methyl-coenzyme M reductase beta subunit family. As to quaternary structure, MCR is a hexamer of two alpha, two beta, and two gamma chains, forming a dimer of heterotrimers. Coenzyme F430 is required as a cofactor.

The protein localises to the cytoplasm. It carries out the reaction coenzyme B + methyl-coenzyme M = methane + coenzyme M-coenzyme B heterodisulfide. The protein operates within one-carbon metabolism; methyl-coenzyme M reduction; methane from methyl-coenzyme M: step 1/1. Functionally, component of the methyl-coenzyme M reductase (MCR) I that catalyzes the reductive cleavage of methyl-coenzyme M (CoM-S-CH3 or 2-(methylthio)ethanesulfonate) using coenzyme B (CoB or 7-mercaptoheptanoylthreonine phosphate) as reductant which results in the production of methane and the mixed heterodisulfide of CoB and CoM (CoM-S-S-CoB). This is the final step in methanogenesis. The chain is Methyl-coenzyme M reductase subunit beta (mcrB) from Methanococcus voltae.